The primary structure comprises 496 residues: MPDVAVIPRPVLLETTDGPPFVLTAATILVVDSAPELVAVGVLAADLLGRLSGRPVEVRYTEGGAPSVVRLRLSEDLPAGDEAYRLVVSEHRVDIDARSAAGLVRAVVTLRQTVSSLGDGTLTVPALRVEDHPRYAWRGLSIDVARHFFTVDDLKAIIGLLAHYKLNVLHLHLTDDQGWRVHLPSRPHLTRASAGTSVGGGPGGFYNPAQLAEIVVARAARGIRVVPEIDVPGHVNAATHAYGDLTPSGEPTDVYTGIEVGFSRLHDDLPATRPFLRDVFTDLAAMTPGEYVHIGGDEVLTMDHDKYARLVGYAASVVRDAGKKVVGWQEISSTPLEPGTVVQYWDINADPAPFVAAAQAGAHVLMSPGSRAYLDMKYDATTELGLEWAGHIELRDAYDWEPSTLIPGVPPESVIGVEAAVWTETLTDLGELTSMLLPRLAAVAEVAWTAPQDRDWDDFSGRVAQHAPFWDRVGFRWHASPQVSWPGPGSAPGAAF.

Catalysis depends on E298, which acts as the Proton donor.

This sequence belongs to the glycosyl hydrolase 20 family.

It catalyses the reaction Hydrolysis of terminal non-reducing N-acetyl-D-hexosamine residues in N-acetyl-beta-D-hexosaminides.. It participates in glycan degradation; chitin degradation. Its function is as follows. Catalyzes the cleavage of beta-N-acetylglucosaminides and beta-N-acetylgalactosaminides. Also catalyzes the hydrolysis of N-acetylchitooligomers. May be involved in chitin degradation. It is not able to cleave beta-glucosides. The protein is Beta-N-acetylhexosaminidase (hex20) of Cellulomonas fimi.